Reading from the N-terminus, the 322-residue chain is 1-aminocyclopropane-1-carboxylate oxidase 1 (322 aa).

Residues 159–259 enclose the Fe2OG dioxygenase domain; sequence PTFGTKVSSY…RMSIASFYNP (101 aa). Fe cation contacts are provided by H183, D185, and H240.

It belongs to the iron/ascorbate-dependent oxidoreductase family. Requires Fe cation as cofactor.

The enzyme catalyses 1-aminocyclopropane-1-carboxylate + L-ascorbate + O2 = ethene + L-dehydroascorbate + hydrogen cyanide + CO2 + 2 H2O. Its pathway is alkene biosynthesis; ethylene biosynthesis via S-adenosyl-L-methionine; ethylene from S-adenosyl-L-methionine: step 2/2. In Oryza sativa subsp. japonica (Rice), this protein is 1-aminocyclopropane-1-carboxylate oxidase 1 (ACO1).